We begin with the raw amino-acid sequence, 231 residues long: Large ribosomal subunit protein uL1 (231 aa).

It belongs to the universal ribosomal protein uL1 family. As to quaternary structure, part of the 50S ribosomal subunit.

Its function is as follows. Binds directly to 23S rRNA. The L1 stalk is quite mobile in the ribosome, and is involved in E site tRNA release. Functionally, protein L1 is also a translational repressor protein, it controls the translation of the L11 operon by binding to its mRNA. The protein is Large ribosomal subunit protein uL1 of Staphylococcus haemolyticus (strain JCSC1435).